Here is a 106-residue protein sequence, read N- to C-terminus: Nucleoid-associated protein PD_1058 (106 aa).

The protein belongs to the YbaB/EbfC family. Homodimer.

It localises to the cytoplasm. It is found in the nucleoid. Binds to DNA and alters its conformation. May be involved in regulation of gene expression, nucleoid organization and DNA protection. The sequence is that of Nucleoid-associated protein PD_1058 from Xylella fastidiosa (strain Temecula1 / ATCC 700964).